Consider the following 351-residue polypeptide: Glycerol-3-phosphate dehydrogenase 1-like protein (351 aa).

12-17 is an NAD(+) binding site; it reads GSGNWG. Residue lysine 122 coordinates substrate. Residue alanine 155 coordinates NAD(+). Lysine 206 serves as the catalytic Proton acceptor. Residues arginine 271, lysine 298, and glutamine 300 each contribute to the NAD(+) site. 271 to 272 serves as a coordination point for substrate; sequence RN.

It belongs to the NAD-dependent glycerol-3-phosphate dehydrogenase family. Interacts with SCN5A.

Its subcellular location is the cytoplasm. The catalysed reaction is sn-glycerol 3-phosphate + NAD(+) = dihydroxyacetone phosphate + NADH + H(+). Functionally, plays a role in regulating cardiac sodium current; decreased enzymatic activity with resulting increased levels of glycerol 3-phosphate activating the DPD1L-dependent SCN5A phosphorylation pathway, may ultimately lead to decreased sodium current; cardiac sodium current may also be reduced due to alterations of NAD(H) balance induced by DPD1L. This is Glycerol-3-phosphate dehydrogenase 1-like protein (Gpd1l) from Mus musculus (Mouse).